We begin with the raw amino-acid sequence, 50 residues long: Thrombin-like enzyme BpirSP27 (50 aa).

One can recognise a Peptidase S1 domain in the interval 1-50 (VVGGDECNINEHRSLVAIFNSTGFFCSGILLNQEWVLTASHCDSTNFQMK). Asn20 carries N-linked (GlcNAc...) asparagine glycosylation. A disulfide bond links Cys26 and Cys42. His41 acts as the Charge relay system in catalysis.

This sequence belongs to the peptidase S1 family. Snake venom subfamily. As to quaternary structure, monomer. N-glycosylated. As to expression, expressed by the venom gland.

Its subcellular location is the secreted. Its activity is regulated as follows. Inhibited by serine protease inhibitors PMSF, benzamidine, leupeptin and aprotinin, as well as by copper (Cu2+) and manganese (Mn2+) ions. Not inhibited by metalloprotease inhibitors EDTA, EGTA and 1,10-phenanthroline, as well as by barium (Ba2+) and calcium ion (Ca2+). Functionally, snake venom serine protease that interferes with the hemostatic system of the prey. It preferentially degrades the Bbeta chain (FGB) of fibrinogen, with minor effects on the Aalpha chain (FGA). It presents a lower ability to degrade fibrin clots than BpirSP41. It hydrolyzes chromogenic substrates S-2238 (used for testing thrombin activity), S-2222 (factor Xa), S-2266 (glandular kallikrein and factor XIa), S-2302 (plasma kallikrein, factor XIa and XIIa), and S-2251 (plasmin). It shows a decrease in the clotting time of human plasma in the presence of increasing doses of the enzyme. Its minimum coagulant dose (MCD) is 3.5 ug. It also promotes platelet aggregation in a concentration-dependent manner in the presence or absence of calcium. It also shows 20% inhibition of the hemolytic activity promoted by the complement pathways and possess only a minor role in the induction of edema and pain in rat. This is Thrombin-like enzyme BpirSP27 from Bothrops pirajai (Piraja's lancehead).